A 301-amino-acid chain; its full sequence is MNILILSRNSRLYSTRRLVEAGRERGHQVRVVDPLRCYMNISPHKPEIHYKGETLENFDGVIPRIGASITFYGTAVLRQFEIMGTFPLNESVAISRSRDKLRSTQLLARKGIGLPMTTFGYSPDDTEDLINLVGGPPMVIKLLEGTQGKGVVLAETQQAAESLIDAFRGLNVHFLAQEYIKEAGGSDIRCFVVGERVVASMRRQAKEGEFRSNIHRGGQASTVRITPEERSMAVRAARIMGLNVAGVDLIRSAHGSLVLEVNSSPGLEGIEKATGKDIAGTIYAFLEKNARQGKTRTRGRG.

The 184-residue stretch at 104 to 287 (TQLLARKGIG…IAGTIYAFLE (184 aa)) folds into the ATP-grasp domain. ATP is bound by residues K141, 178–179 (EY), D187, and 211–213 (RSN). Mg(2+) contacts are provided by D248, E260, and N262. Residues D248, E260, and N262 each coordinate Mn(2+).

This sequence belongs to the RimK family. Requires Mg(2+) as cofactor. Mn(2+) is required as a cofactor.

The chain is Probable alpha-L-glutamate ligase from Alkalilimnicola ehrlichii (strain ATCC BAA-1101 / DSM 17681 / MLHE-1).